The following is a 449-amino-acid chain: UDP-glycosyltransferase 76E7 (449 aa).

Residues Ser-275, 333–335 (APQ), 350–358 (HCGWNSTLE), and 372–375 (TTDQ) contribute to the UDP-alpha-D-glucose site.

Belongs to the UDP-glycosyltransferase family.

This chain is UDP-glycosyltransferase 76E7 (UGT76E7), found in Arabidopsis thaliana (Mouse-ear cress).